Reading from the N-terminus, the 516-residue chain is MARSVDTEAMTTRDPSSKRGGWKTFPFMIATLLGLSIASFGWVMNLVVFLIKEFNIKSIAATQNSNIVNGCVSMLPVVAAILADSFFGNIPVISVSAFISLLGIILLTMITSLDHLRPPPCETGSILCESPSKLQLGILYIALALVIIGSAGTRFTLASAGANQYEKPKEQGSFFNWYFLTLYTGAITGATAIVYTQENASWKLGFGLCAVANLISFIVFVSGKRYYKHDKPMGSPFTNLIRVVVAATRKRKAVISSREEDYHHGLGREGKTSSAMPSKSFRFFNRAALKTEDDSVNNNWRLCSVQEVEDFKAVFRVLPLLLAIIFVSTPMVTQTSLIILQALVTDRGLGPHFKIPAGSLQVIVIITACIVILMNNCLVYPMYQKLAHKPLTPLQKVGIGHVFIILSMAISAIVEAKRLKTVTNGHSMSVLWLHRDFIASVVIGISFYLSTALITLIQKTTKWLPNDINHGRVDNVYWLLVIVGVLNYFLVCAWFYRYRNLNDDDDQEQDPKDDTT.

Helical transmembrane passes span 31 to 51, 67 to 87, 90 to 110, 138 to 158, 174 to 194, 201 to 221, 320 to 340, 362 to 382, 394 to 414, 437 to 457, and 476 to 496; these read TLLG…VFLI, IVNG…DSFF, IPVI…LTMI, ILYI…FTLA, FFNW…TAIV, SWKL…IVFV, LLLA…LIIL, VIVI…VYPM, LQKV…SAIV, FIAS…ITLI, and VYWL…AWFY.

Belongs to the major facilitator superfamily. Proton-dependent oligopeptide transporter (POT/PTR) (TC 2.A.17) family. Not detected.

It localises to the membrane. Transporter involved in a passive nitrate efflux. In Arabidopsis thaliana (Mouse-ear cress), this protein is Putative protein NRT1/ PTR FAMILY 2.2 (NPF2.2).